Here is a 347-residue protein sequence, read N- to C-terminus: Geranylgeranyl pyrophosphate synthase 7, chloroplastic (347 aa).

The transit peptide at Met1–Leu39 directs the protein to the chloroplast. 3 residues coordinate isopentenyl diphosphate: Lys95, Arg98, and His127. The Mg(2+) site is built by Asp134 and Asp140. Position 145 (Arg145) interacts with dimethylallyl diphosphate. An isopentenyl diphosphate-binding site is contributed by Arg146. Dimethylallyl diphosphate-binding residues include Lys232, Thr233, Gln270, Lys287, and Lys297.

It belongs to the FPP/GGPP synthase family. Monomer. Mg(2+) serves as cofactor.

It is found in the plastid. The protein resides in the chloroplast. The catalysed reaction is isopentenyl diphosphate + dimethylallyl diphosphate = (2E)-geranyl diphosphate + diphosphate. It carries out the reaction isopentenyl diphosphate + (2E)-geranyl diphosphate = (2E,6E)-farnesyl diphosphate + diphosphate. It catalyses the reaction isopentenyl diphosphate + (2E,6E)-farnesyl diphosphate = (2E,6E,10E)-geranylgeranyl diphosphate + diphosphate. The protein operates within isoprenoid biosynthesis; farnesyl diphosphate biosynthesis; farnesyl diphosphate from geranyl diphosphate and isopentenyl diphosphate: step 1/1. Its pathway is isoprenoid biosynthesis; geranyl diphosphate biosynthesis; geranyl diphosphate from dimethylallyl diphosphate and isopentenyl diphosphate: step 1/1. It functions in the pathway isoprenoid biosynthesis; geranylgeranyl diphosphate biosynthesis; geranylgeranyl diphosphate from farnesyl diphosphate and isopentenyl diphosphate: step 1/1. In terms of biological role, catalyzes the trans-addition of the three molecules of IPP onto DMAPP to form geranylgeranyl pyrophosphate. This chain is Geranylgeranyl pyrophosphate synthase 7, chloroplastic, found in Arabidopsis thaliana (Mouse-ear cress).